Consider the following 248-residue polypeptide: 5'-nucleotidase SurE (248 aa).

A divalent metal cation-binding residues include Asp8, Asp9, Ser39, and Asn91.

Belongs to the SurE nucleotidase family. The cofactor is a divalent metal cation.

Its subcellular location is the cytoplasm. The catalysed reaction is a ribonucleoside 5'-phosphate + H2O = a ribonucleoside + phosphate. In terms of biological role, nucleotidase that shows phosphatase activity on nucleoside 5'-monophosphates. The polypeptide is 5'-nucleotidase SurE (Pseudoalteromonas atlantica (strain T6c / ATCC BAA-1087)).